The following is a 76-amino-acid chain: MPAKEKTFEESLNALEEIVQRLERGDVPLEEALAAFQEGMALSKQCQDTLEKAEKTLTKMMTENNEEIVFEESEEA.

Belongs to the XseB family. As to quaternary structure, heterooligomer composed of large and small subunits.

Its subcellular location is the cytoplasm. The enzyme catalyses Exonucleolytic cleavage in either 5'- to 3'- or 3'- to 5'-direction to yield nucleoside 5'-phosphates.. Its function is as follows. Bidirectionally degrades single-stranded DNA into large acid-insoluble oligonucleotides, which are then degraded further into small acid-soluble oligonucleotides. In Enterococcus faecalis (strain ATCC 700802 / V583), this protein is Exodeoxyribonuclease 7 small subunit.